The chain runs to 247 residues: Carboxy-S-adenosyl-L-methionine synthase (247 aa).

S-adenosyl-L-methionine-binding positions include tyrosine 38, 63–65 (GCS), asparagine 131, and arginine 198.

Belongs to the class I-like SAM-binding methyltransferase superfamily. Cx-SAM synthase family. Homodimer.

It carries out the reaction prephenate + S-adenosyl-L-methionine = carboxy-S-adenosyl-L-methionine + 3-phenylpyruvate + H2O. Functionally, catalyzes the conversion of S-adenosyl-L-methionine (SAM) to carboxy-S-adenosyl-L-methionine (Cx-SAM). This is Carboxy-S-adenosyl-L-methionine synthase from Desulforapulum autotrophicum (strain ATCC 43914 / DSM 3382 / VKM B-1955 / HRM2) (Desulfobacterium autotrophicum).